Here is a 321-residue protein sequence, read N- to C-terminus: Mechanosensory protein 3 (321 aa).

LIM zinc-binding domains follow at residues Asn-27–Ile-86 and His-87–Asp-152. Positions Arg-217–Lys-276 form a DNA-binding region, homeobox.

In terms of assembly, interacts with unc-86; the heterooligomer binds to the promoters of mec-3, mec-4 and mec-7. Expressed in the mechanosensory neurons ALML, ALMR, PLML, PLMR, AVM and PVM, and the FLPL and FLPR neurons.

It localises to the nucleus. In terms of biological role, transcription factor. Specifies differentiation of the set of six touch receptor neurons (TRNs). May positively modulate expression of both its own gene and also of homeobox ARX homolog alr-1 in TRNs, forming a positive feedback loop with alr-1, thereby restricting the variability of expression of mec-3. Required to determine the identity of ALM sensory neurons, acting by interacting with unc-86, thereby preventing unc-86 cooperating with pag-3 to induce BDU-neuron specific genes. Binds cooperatively as a heterodimer with unc-86 to sites in the mec-3 gene promoter. Promotes outgrowth of lateral dendritic branches on the PVD nociceptive neurons, probably acting both directly, and upstream of zinc finger protein egl-46. The sequence is that of Mechanosensory protein 3 (mec-3) from Caenorhabditis elegans.